A 383-amino-acid chain; its full sequence is WAT1-related protein At3g18200 (383 aa).

Residues Met1 to Arg16 show a composition bias toward basic residues. The interval Met1 to Lys23 is disordered. 10 helical membrane passes run Val33 to Ser53, Val65 to Phe85, Pro91 to Ala111, Thr126 to Leu146, Gly158 to Tyr178, Leu204 to Leu224, Thr237 to Val257, Leu272 to Trp292, Val300 to Ile320, and Leu325 to Trp345. 2 EamA domains span residues Phe44 to Thr173 and Leu216 to Leu344.

This sequence belongs to the drug/metabolite transporter (DMT) superfamily. Plant drug/metabolite exporter (P-DME) (TC 2.A.7.4) family.

It localises to the membrane. The sequence is that of WAT1-related protein At3g18200 from Arabidopsis thaliana (Mouse-ear cress).